We begin with the raw amino-acid sequence, 145 residues long: Oocyte zinc finger protein XlCOF8.4I (145 aa).

Residues histidine 1–proline 25 form a disordered region. A C2H2-type zinc finger spans residues leucine 123–histidine 145.

The protein belongs to the krueppel C2H2-type zinc-finger protein family.

The protein localises to the nucleus. Functionally, may be involved in transcriptional regulation. In Xenopus laevis (African clawed frog), this protein is Oocyte zinc finger protein XlCOF8.4I.